The following is a 436-amino-acid chain: MGQVLPLVTRQGDRIAIVSGLRTPFARQATAFHGIPTVDLGKMVVGELLARSEIPAEVIEQLVFGQVVQMPEAPNIAREIVLGTGMNVHTDAYSVSRACATSFQAVANVAESLMAGTIRAGIAGGADSSSVLPIGVSKKLAYVLVDVNKARTMSQRLKLFSRLRLRDLMPVPPAVAEYSTGLRMGDTAEQMAKTYGITREQQDALAHRSHQRAAQAWSDGKLKEEVMTAFIPPYKQPLVEDNNIRGNSSLADYAKLRPAFDRKHGTVTAANSTPLTDGATAVILMTESRAKELGLVPLGYLRSYAFTAIDVWQDMLLGPAWSTPLALERAGLTMSELTLIDMHEAFAAQTLANIQLLGSERFAREVLGRAHATGEVDDSKFNVLGGSIAYGHPFAATGARMITQTLHELRRRGGGFGLVTACAAGGLGAAMVLEAE.

C99 (acyl-thioester intermediate) is an active-site residue. Residues H392 and C422 each act as proton acceptor in the active site.

Belongs to the thiolase-like superfamily. Thiolase family. In terms of assembly, heterotetramer of two alpha chains (FadJ) and two beta chains (FadI).

It is found in the cytoplasm. The catalysed reaction is an acyl-CoA + acetyl-CoA = a 3-oxoacyl-CoA + CoA. The protein operates within lipid metabolism; fatty acid beta-oxidation. Its function is as follows. Catalyzes the final step of fatty acid oxidation in which acetyl-CoA is released and the CoA ester of a fatty acid two carbons shorter is formed. The chain is 3-ketoacyl-CoA thiolase from Shigella flexneri.